Consider the following 341-residue polypeptide: Brain-specific homeobox/POU domain protein 3 (341 aa).

The POU-IV box motif lies at 55–65 (RGAEALAAVDI). The POU-specific domain maps to 182-259 (ETETDPRELE…ILEAWLEEAE (78 aa)). Positions 277 to 336 (KKRKRTSIAAPEKRSLEAYFAVQPRPSSEKIAAIAEKLDLKKNVVRVWFCNQRQKQKRMK) form a DNA-binding region, homeobox.

It belongs to the POU transcription factor family. Class-4 subfamily.

It localises to the nucleus. May play a role in specifying terminally differentiated neuronal phenotypes. The chain is Brain-specific homeobox/POU domain protein 3 (BRN3) from Gallus gallus (Chicken).